The primary structure comprises 94 residues: Protein RESPONSE TO LOW SULFUR 2 (94 aa).

A coiled-coil region spans residues 15–63 (VDELRRKNGEMEKAVEEMKKEMLQLWRRTQVAEEAEERLCSQLAELEAE).

In terms of biological role, may be involved in defense responses monitoring. Probably implicated into osmotic stress signaling. The polypeptide is Protein RESPONSE TO LOW SULFUR 2 (Arabidopsis thaliana (Mouse-ear cress)).